Consider the following 186-residue polypeptide: Elongation factor P (186 aa).

It belongs to the elongation factor P family.

It localises to the cytoplasm. Its pathway is protein biosynthesis; polypeptide chain elongation. Functionally, involved in peptide bond synthesis. Stimulates efficient translation and peptide-bond synthesis on native or reconstituted 70S ribosomes in vitro. Probably functions indirectly by altering the affinity of the ribosome for aminoacyl-tRNA, thus increasing their reactivity as acceptors for peptidyl transferase. This is Elongation factor P from Cupriavidus metallidurans (strain ATCC 43123 / DSM 2839 / NBRC 102507 / CH34) (Ralstonia metallidurans).